A 144-amino-acid polypeptide reads, in one-letter code: 3-dehydroquinate dehydratase (144 aa).

Residue Y22 is the Proton acceptor of the active site. Residues N73, H79, and D86 each coordinate substrate. The active-site Proton donor is the H99. Residues 100 to 101 and R110 contribute to the substrate site; that span reads IS.

Belongs to the type-II 3-dehydroquinase family. As to quaternary structure, homododecamer.

The enzyme catalyses 3-dehydroquinate = 3-dehydroshikimate + H2O. It functions in the pathway metabolic intermediate biosynthesis; chorismate biosynthesis; chorismate from D-erythrose 4-phosphate and phosphoenolpyruvate: step 3/7. Its function is as follows. Catalyzes a trans-dehydration via an enolate intermediate. This is 3-dehydroquinate dehydratase from Clostridium acetobutylicum (strain ATCC 824 / DSM 792 / JCM 1419 / IAM 19013 / LMG 5710 / NBRC 13948 / NRRL B-527 / VKM B-1787 / 2291 / W).